The chain runs to 359 residues: Non-classical arabinogalactan protein 31 (359 aa).

The N-terminal stretch at 1–24 is a signal peptide; it reads MGFIGKSVLVSLVALWCFTSSVFT. A disordered region spans residues 31-215; it reads TQTPSLAPAP…PPVSPPTKPP (185 aa). Residues 44-66 show a composition bias toward basic residues; the sequence is HHGHHHPHPPHHHHPHPHPHPHP. Pro residues predominate over residues 67–215; the sequence is PAKSPVKPPV…PPVSPPTKPP (149 aa). 4-hydroxyproline is present on residues proline 71, proline 75, proline 79, proline 82, proline 83, proline 87, proline 91, proline 95, proline 99, proline 103, proline 107, proline 111, proline 114, proline 115, proline 119, proline 123, proline 127, proline 131, proline 135, proline 139, proline 143, proline 147, proline 151, proline 155, proline 159, proline 163, proline 167, proline 171, proline 175, proline 179, proline 183, proline 186, proline 187, proline 191, proline 195, proline 199, proline 203, proline 207, proline 210, proline 211, proline 215, and proline 219. Proline 71, proline 75, proline 79, proline 82, proline 83, proline 87, proline 91, proline 95, proline 99, proline 103, proline 107, proline 111, proline 114, proline 115, proline 119, proline 123, proline 127, proline 131, proline 135, proline 139, proline 143, proline 147, proline 151, proline 155, proline 159, proline 163, proline 167, proline 171, proline 175, proline 179, proline 183, proline 186, proline 187, proline 191, proline 195, proline 199, proline 203, proline 207, proline 210, proline 211, proline 215, and proline 219 each carry an O-linked (Ara...) hydroxyproline glycan. Repeat unit 1 spans residues 90 to 109; that stretch reads PPVYPPTKAPVKPPTKPPVK. A run of 3 repeats spans residues 122–141, 142–161, and 162–181. Asparagine 226 and asparagine 269 each carry an N-linked (GlcNAc...) asparagine glycan.

It belongs to the non-classical AGP family. Hydroxylated on numerous prolines in the proline-rich region. In terms of processing, O-glycosylated on numerous hydroxyprolines in the proline-rich region; noncontiguous hydroxylproline residues are glycosylated with arabinogalactan. Expressed in vascular bundles of roots, leaves, sepals and stamen filaments, and pistils but not stigma.

The protein localises to the secreted. The protein resides in the cell wall. Its function is as follows. Proteoglycan that may contribute to the strengthening of cell walls. The sequence is that of Non-classical arabinogalactan protein 31 from Arabidopsis thaliana (Mouse-ear cress).